A 395-amino-acid polypeptide reads, in one-letter code: Elongation factor Tu (395 aa).

Positions 10–204 (KPHVNVGTIG…AVDAYIDTPL (195 aa)) constitute a tr-type G domain. A G1 region spans residues 19-26 (GHVDHGKT). 19–26 (GHVDHGKT) contacts GTP. Mg(2+) is bound at residue Thr-26. The tract at residues 60-64 (GITIN) is G2. A G3 region spans residues 81-84 (DCPG). GTP contacts are provided by residues 81-85 (DCPGH) and 136-139 (NKAD). The G4 stretch occupies residues 136 to 139 (NKAD). Residues 174–176 (SAL) form a G5 region.

Belongs to the TRAFAC class translation factor GTPase superfamily. Classic translation factor GTPase family. EF-Tu/EF-1A subfamily. Monomer.

It is found in the cytoplasm. It catalyses the reaction GTP + H2O = GDP + phosphate + H(+). Its function is as follows. GTP hydrolase that promotes the GTP-dependent binding of aminoacyl-tRNA to the A-site of ribosomes during protein biosynthesis. This chain is Elongation factor Tu, found in Acholeplasma laidlawii (strain PG-8A).